We begin with the raw amino-acid sequence, 396 residues long: Ribosomal RNA large subunit methyltransferase I (396 aa).

The PUA domain occupies Ala-2–Phe-79.

This sequence belongs to the methyltransferase superfamily. RlmI family.

Its subcellular location is the cytoplasm. The enzyme catalyses cytidine(1962) in 23S rRNA + S-adenosyl-L-methionine = 5-methylcytidine(1962) in 23S rRNA + S-adenosyl-L-homocysteine + H(+). In terms of biological role, specifically methylates the cytosine at position 1962 (m5C1962) of 23S rRNA. The polypeptide is Ribosomal RNA large subunit methyltransferase I (Shewanella sp. (strain ANA-3)).